The sequence spans 134 residues: Small ribosomal subunit protein bS6 (134 aa).

The span at 113-122 (NKDIKEKEQP) shows a compositional bias: basic and acidic residues. The tract at residues 113–134 (NKDIKEKEQPSESNVDADLKVN) is disordered.

This sequence belongs to the bacterial ribosomal protein bS6 family.

Functionally, binds together with bS18 to 16S ribosomal RNA. This is Small ribosomal subunit protein bS6 from Borrelia recurrentis (strain A1).